The following is a 263-amino-acid chain: Pimeloyl-[acyl-carrier protein] methyl ester esterase (263 aa).

Substrate is bound by residues Trp28, Ser86–Leu87, and Phe149–Gln153. Residue Ser86 is the Nucleophile of the active site. Catalysis depends on residues Asp213 and His240. Residue His240 participates in substrate binding.

The protein belongs to the AB hydrolase superfamily. Carboxylesterase BioH family. In terms of assembly, monomer.

The protein localises to the cytoplasm. It catalyses the reaction 6-carboxyhexanoyl-[ACP] methyl ester + H2O = 6-carboxyhexanoyl-[ACP] + methanol + H(+). Its pathway is cofactor biosynthesis; biotin biosynthesis. The physiological role of BioH is to remove the methyl group introduced by BioC when the pimeloyl moiety is complete. It allows to synthesize pimeloyl-ACP via the fatty acid synthetic pathway through the hydrolysis of the ester bonds of pimeloyl-ACP esters. This is Pimeloyl-[acyl-carrier protein] methyl ester esterase from Shewanella oneidensis (strain ATCC 700550 / JCM 31522 / CIP 106686 / LMG 19005 / NCIMB 14063 / MR-1).